Consider the following 921-residue polypeptide: Sodium/calcium exchanger 2 (921 aa).

The first 20 residues, 1-20 (MAPLALVGVTLLLAAPPCSG), serve as a signal peptide directing secretion. Residues 21-68 (AATPTPSLPPPPANDSDTSTGGCQGSYRCQPGVLLPVWEPDDPSLGDK) lie on the Extracellular side of the membrane. Residues 22 to 42 (ATPTPSLPPPPANDSDTSTGG) form a disordered region. Asparagine 34 carries an N-linked (GlcNAc...) asparagine glycan. Residues 69–90 (AARAVVYFVAMVYMFLGVSIIA) form a helical membrane-spanning segment. At 91 to 130 (DRFMAAIEVITSKEKEITITKANGETSVGTVRIWNETVSN) the chain is on the cytoplasmic side. Residues 131–152 (LTLMALGSSAPEILLSVIEVCG) traverse the membrane as a helical segment. The stretch at 135 to 175 (ALGSSAPEILLSVIEVCGHNFQAGELGPGTIVGSAAFNMFV) is one Alpha-1 repeat. At 153–164 (HNFQAGELGPGT) the chain is on the extracellular side. Residues 165-185 (IVGSAAFNMFVVIAVCIYVIP) form a helical membrane-spanning segment. Topologically, residues 186–196 (AGESRKIKHLR) are cytoplasmic. The chain crosses the membrane as a helical span at residues 197–219 (VFFVTASWSIFAYVWLYLILAVF). Residues 220-222 (SPG) are Extracellular-facing. A helical transmembrane segment spans residues 223–246 (VVQVWEALLTLVFFPVCVVFAWMA). Topologically, residues 247–720 (DKRLLFYKYV…DGSREERLPS (474 aa)) are cytoplasmic. The segment at 248 to 267 (KRLLFYKYVYKRYRTDPRSG) is putative calmodulin-binding region. Calx-beta domains are found at residues 384–483 (GAGE…VRLL) and 512–612 (ATVT…IELG). Ca(2+) is bound by residues glutamate 407, aspartate 443, aspartate 468, aspartate 469, isoleucine 471, glutamate 473, glutamate 476, aspartate 518, aspartate 519, aspartate 520, glutamate 536, aspartate 598, glutamate 599, and glutamate 600. Serine 622 carries the post-translational modification Phosphoserine. Glutamate 665 lines the Ca(2+) pocket. Residues 721–740 (CFDYVMHFLTVFWKVLFACV) form a helical membrane-spanning segment. Residues 741–747 (PPTEYCH) are Extracellular-facing. The helical transmembrane segment at 748 to 770 (GWACFGVSILVIGLLTALIGDLA) threads the bilayer. Residues 771 to 772 (SH) are Cytoplasmic-facing. Residues 773 to 791 (FGCTVGLKDSVNAVVFVAL) traverse the membrane as a helical segment. Residues 790-826 (ALGTSIPDTFASKVAALQDQCADASIGNVTGSNAVNV) form an Alpha-2 repeat. Residues 792-822 (GTSIPDTFASKVAALQDQCADASIGNVTGSN) lie on the Extracellular side of the membrane. Asparagine 817 is a glycosylation site (N-linked (GlcNAc...) asparagine). Residues 823–843 (AVNVFLGLGVAWSVAAVYWAV) traverse the membrane as a helical segment. At 844 to 854 (QGRPFEVRTGT) the chain is on the cytoplasmic side. Residues 855-875 (LAFSVTLFTVFAFVGIAVLLY) traverse the membrane as a helical segment. At 876–892 (RRRPHIGGELGGPRGPK) the chain is on the extracellular side. A helical membrane pass occupies residues 893-909 (LATTALFLGLWLLYILF). The Cytoplasmic segment spans residues 910–921 (ASLEAYCHIRGF).

Belongs to the Ca(2+):cation antiporter (CaCA) (TC 2.A.19) family. SLC8 subfamily.

Its subcellular location is the cell membrane. The protein localises to the basolateral cell membrane. It localises to the perikaryon. The protein resides in the cell projection. It is found in the dendrite. Its subcellular location is the dendritic spine. It catalyses the reaction Ca(2+)(in) + 3 Na(+)(out) = Ca(2+)(out) + 3 Na(+)(in). Its activity is regulated as follows. Calcium transport is down-regulated by Na(+) and stimulated by Ca(2+). In terms of biological role, mediates the electrogenic exchange of Ca(2+) against Na(+) ions across the cell membrane, and thereby contributes to the regulation of cytoplasmic Ca(2+) levels and Ca(2+)-dependent cellular processes. Contributes to cellular Ca(2+) homeostasis in excitable cells. Contributes to the rapid decrease of cytoplasmic Ca(2+) levels back to baseline after neuronal activation, and thereby contributes to modulate synaptic plasticity, learning and memory. Plays a role in regulating urinary Ca(2+) and Na(+) excretion. The polypeptide is Sodium/calcium exchanger 2 (SLC8A2) (Homo sapiens (Human)).